The sequence spans 154 residues: Ribosomal RNA large subunit methyltransferase H (154 aa).

An S-adenosyl-L-methionine-binding site is contributed by Gly-103.

The protein belongs to the RNA methyltransferase RlmH family. In terms of assembly, homodimer.

It is found in the cytoplasm. It carries out the reaction pseudouridine(1915) in 23S rRNA + S-adenosyl-L-methionine = N(3)-methylpseudouridine(1915) in 23S rRNA + S-adenosyl-L-homocysteine + H(+). In terms of biological role, specifically methylates the pseudouridine at position 1915 (m3Psi1915) in 23S rRNA. This is Ribosomal RNA large subunit methyltransferase H from Gemmatimonas aurantiaca (strain DSM 14586 / JCM 11422 / NBRC 100505 / T-27).